The sequence spans 224 residues: Protein DEHYDRATION-INDUCED 19 homolog 4 (224 aa).

Over residues 1 to 12 the composition is skewed to polar residues; the sequence is MDSNWINCPSVF. The interval 1–23 is disordered; it reads MDSNWINCPSVFSSSSSSSRRCQ. Low complexity predominate over residues 13–23; the sequence is SSSSSSSRRCQ. Residue Thr117 is modified to Phosphothreonine.

Belongs to the Di19 family. Phosphorylated in vitro by CPK3 or CPK11. As to expression, expressed in seedlings, roots, leaves, stems, flowers and siliques.

Its subcellular location is the cytoplasm. The protein localises to the perinuclear region. The chain is Protein DEHYDRATION-INDUCED 19 homolog 4 (DI19-4) from Arabidopsis thaliana (Mouse-ear cress).